The chain runs to 162 residues: Endoribonuclease YbeY (162 aa).

3 residues coordinate Zn(2+): His-118, His-122, and His-128.

This sequence belongs to the endoribonuclease YbeY family. Zn(2+) serves as cofactor.

Its subcellular location is the cytoplasm. Its function is as follows. Single strand-specific metallo-endoribonuclease involved in late-stage 70S ribosome quality control and in maturation of the 3' terminus of the 16S rRNA. This chain is Endoribonuclease YbeY, found in Caulobacter sp. (strain K31).